Reading from the N-terminus, the 69-residue chain is DNA-directed RNA polymerase subunit epsilon (69 aa).

It belongs to the RNA polymerase subunit epsilon family. As to quaternary structure, RNAP is composed of a core of 2 alpha, a beta and a beta' subunit. The core is associated with a delta subunit, and at least one of epsilon or omega. When a sigma factor is associated with the core the holoenzyme is formed, which can initiate transcription.

The catalysed reaction is RNA(n) + a ribonucleoside 5'-triphosphate = RNA(n+1) + diphosphate. In terms of biological role, a non-essential component of RNA polymerase (RNAP). This is DNA-directed RNA polymerase subunit epsilon from Bacillus pumilus (strain SAFR-032).